The primary structure comprises 80 residues: UPF0248 protein M1425_2629 (80 aa).

This sequence belongs to the UPF0248 family.

In Saccharolobus islandicus (strain M.14.25 / Kamchatka #1) (Sulfolobus islandicus), this protein is UPF0248 protein M1425_2629.